A 236-amino-acid polypeptide reads, in one-letter code: Phosphoribosylaminoimidazole-succinocarboxamide synthase (236 aa).

The protein belongs to the SAICAR synthetase family.

The enzyme catalyses 5-amino-1-(5-phospho-D-ribosyl)imidazole-4-carboxylate + L-aspartate + ATP = (2S)-2-[5-amino-1-(5-phospho-beta-D-ribosyl)imidazole-4-carboxamido]succinate + ADP + phosphate + 2 H(+). It participates in purine metabolism; IMP biosynthesis via de novo pathway; 5-amino-1-(5-phospho-D-ribosyl)imidazole-4-carboxamide from 5-amino-1-(5-phospho-D-ribosyl)imidazole-4-carboxylate: step 1/2. This chain is Phosphoribosylaminoimidazole-succinocarboxamide synthase, found in Chlorobium limicola (strain DSM 245 / NBRC 103803 / 6330).